The following is a 415-amino-acid chain: Nuclear hormone receptor family member nhr-153 (415 aa).

Residues 26–105 constitute a DNA-binding region (nuclear receptor); sequence PSVCQICRNP…AGMNPMAIQA (80 aa). 2 NR C4-type zinc fingers span residues 29–49 and 65–88; these read CQICRNPAIGYHYEVPSCNGC and CFKVSNCLDGNDVIDTSKRVCRAC. The region spanning 170-406 is the NR LBD domain; the sequence is DQRDLSTALS…DPEVLKKKCI (237 aa).

Belongs to the nuclear hormone receptor family.

Its subcellular location is the nucleus. Orphan nuclear receptor. The protein is Nuclear hormone receptor family member nhr-153 (nhr-153) of Caenorhabditis elegans.